Consider the following 201-residue polypeptide: MNKSRIDKQNEVYNFIKLQIKEKGYPPSVREICKAVGLSSTSSVHFHLKRLEKEGLIKRDSSKTRAIEIVDPTSKKEVINVPIVGTITAGNPILAIENIEDVFPLPIDYVKNTKDLFMLKVSGESMIEAGILNGDLAIIEKTDSANNGDIVVALIDNEATLKRFFKESSYIRLQPENKSMKPIILENCKVLGRLVGIYRKY.

A DNA-binding region (H-T-H motif) is located at residues 29–49; that stretch reads VREICKAVGLSSTSSVHFHLK. Catalysis depends on for autocatalytic cleavage activity residues Ser125 and Lys162.

It belongs to the peptidase S24 family. Homodimer.

The enzyme catalyses Hydrolysis of Ala-|-Gly bond in repressor LexA.. Represses a number of genes involved in the response to DNA damage (SOS response), including recA and lexA. In the presence of single-stranded DNA, RecA interacts with LexA causing an autocatalytic cleavage which disrupts the DNA-binding part of LexA, leading to derepression of the SOS regulon and eventually DNA repair. This chain is LexA repressor, found in Clostridium botulinum (strain ATCC 19397 / Type A).